A 753-amino-acid chain; its full sequence is Polyribonucleotide nucleotidyltransferase (753 aa).

Residues Asp543 and Asp549 each contribute to the Mg(2+) site. The KH domain maps to 609–668; it reads PRITTVKIPVAKIGELIGPKGKNINALTEETGANISIEDDGTVFISAADGASAEAAIEKI. The S1 motif domain occupies 680-749; the sequence is GERFLGTVVK…NRGKISLVPV (70 aa).

Belongs to the polyribonucleotide nucleotidyltransferase family. The cofactor is Mg(2+).

It localises to the cytoplasm. The enzyme catalyses RNA(n+1) + phosphate = RNA(n) + a ribonucleoside 5'-diphosphate. In terms of biological role, involved in mRNA degradation. Catalyzes the phosphorolysis of single-stranded polyribonucleotides processively in the 3'- to 5'-direction. This is Polyribonucleotide nucleotidyltransferase from Corynebacterium glutamicum (strain R).